The primary structure comprises 128 residues: Large ribosomal subunit protein bL17 (128 aa).

Belongs to the bacterial ribosomal protein bL17 family. In terms of assembly, part of the 50S ribosomal subunit. Contacts protein L32.

The polypeptide is Large ribosomal subunit protein bL17 (Vibrio cholerae serotype O1 (strain ATCC 39541 / Classical Ogawa 395 / O395)).